The chain runs to 401 residues: Nicotinate phosphoribosyltransferase (401 aa).

The residue at position 221 (H221) is a Phosphohistidine; by autocatalysis.

Belongs to the NAPRTase family. Post-translationally, transiently phosphorylated on a His residue during the reaction cycle. Phosphorylation strongly increases the affinity for substrates and increases the rate of nicotinate D-ribonucleotide production. Dephosphorylation regenerates the low-affinity form of the enzyme, leading to product release.

The catalysed reaction is nicotinate + 5-phospho-alpha-D-ribose 1-diphosphate + ATP + H2O = nicotinate beta-D-ribonucleotide + ADP + phosphate + diphosphate. It functions in the pathway cofactor biosynthesis; NAD(+) biosynthesis; nicotinate D-ribonucleotide from nicotinate: step 1/1. Functionally, catalyzes the synthesis of beta-nicotinate D-ribonucleotide from nicotinate and 5-phospho-D-ribose 1-phosphate at the expense of ATP. The protein is Nicotinate phosphoribosyltransferase of Pectobacterium atrosepticum (strain SCRI 1043 / ATCC BAA-672) (Erwinia carotovora subsp. atroseptica).